The following is a 473-amino-acid chain: Ribosomal RNA small subunit methyltransferase F (473 aa).

Residues 123 to 129, glutamate 147, aspartate 174, and aspartate 192 contribute to the S-adenosyl-L-methionine site; that span reads AAAPGSK. Cysteine 245 (nucleophile) is an active-site residue.

The protein belongs to the class I-like SAM-binding methyltransferase superfamily. RsmB/NOP family.

Its subcellular location is the cytoplasm. The enzyme catalyses cytidine(1407) in 16S rRNA + S-adenosyl-L-methionine = 5-methylcytidine(1407) in 16S rRNA + S-adenosyl-L-homocysteine + H(+). Its function is as follows. Specifically methylates the cytosine at position 1407 (m5C1407) of 16S rRNA. The sequence is that of Ribosomal RNA small subunit methyltransferase F from Vibrio cholerae serotype O1 (strain ATCC 39315 / El Tor Inaba N16961).